A 394-amino-acid polypeptide reads, in one-letter code: Phosphoglycerate kinase (394 aa).

Substrate contacts are provided by residues 21 to 23 (DFN), Arg36, 59 to 62 (HLGR), Arg118, and Arg151. Ser183 bears the Phosphoserine mark. ATP-binding residues include Lys201 and Gly292. Thr299 carries the phosphothreonine modification. ATP-binding positions include Glu323 and 350–353 (GGDS).

It belongs to the phosphoglycerate kinase family. As to quaternary structure, monomer.

The protein localises to the cytoplasm. It carries out the reaction (2R)-3-phosphoglycerate + ATP = (2R)-3-phospho-glyceroyl phosphate + ADP. It participates in carbohydrate degradation; glycolysis; pyruvate from D-glyceraldehyde 3-phosphate: step 2/5. The polypeptide is Phosphoglycerate kinase (Bacillus cereus (strain B4264)).